The sequence spans 417 residues: Gamma-glutamyl phosphate reductase (417 aa).

This sequence belongs to the gamma-glutamyl phosphate reductase family.

Its subcellular location is the cytoplasm. It catalyses the reaction L-glutamate 5-semialdehyde + phosphate + NADP(+) = L-glutamyl 5-phosphate + NADPH + H(+). The protein operates within amino-acid biosynthesis; L-proline biosynthesis; L-glutamate 5-semialdehyde from L-glutamate: step 2/2. Its function is as follows. Catalyzes the NADPH-dependent reduction of L-glutamate 5-phosphate into L-glutamate 5-semialdehyde and phosphate. The product spontaneously undergoes cyclization to form 1-pyrroline-5-carboxylate. This is Gamma-glutamyl phosphate reductase from Idiomarina loihiensis (strain ATCC BAA-735 / DSM 15497 / L2-TR).